Here is a 155-residue protein sequence, read N- to C-terminus: UPF0461 protein C5orf24 homolog (155 aa).

The segment covering 60–69 (NETHLQTSTS) has biased composition (polar residues). The interval 60 to 155 (NETHLQTSTS…QQALMCSSDA (96 aa)) is disordered. Residues 78 to 92 (LKKKKNVGRSGKRGR) are compositionally biased toward basic residues. Residues 94 to 107 (SGTTKSAGYRTSTG) show a composition bias toward polar residues.

It belongs to the UPF0461 family.

The protein is UPF0461 protein C5orf24 homolog of Xenopus laevis (African clawed frog).